We begin with the raw amino-acid sequence, 662 residues long: PAN2-PAN3 deadenylation complex subunit PAN3 (662 aa).

Disordered regions lie at residues 1-26 and 59-131; these read MASA…AREN and TTYQ…RAET. A C3H1-type zinc finger spans residues 26–55; that stretch reads NAKDTLCRNVTIYGRCRYEDKGCAFNHDPH. A compositionally biased stretch (polar residues) spans 72 to 85; the sequence is DSPSFTPSLLSSNG. Over residues 86–102 the composition is skewed to low complexity; it reads SSPTTASVTAKKAATIS. Residues 114-126 show a composition bias toward polar residues; that stretch reads RNITSRSNTSTPS. Positions 265–525 are pseudokinase domain; sequence QTLPNTQLPA…NIDIFITGIS (261 aa). ATP-binding positions include R317, 366–373, and 425–426; these read DYHPLSKT and SK. Residues 526-564 are a coiled coil; the sequence is SQLMSTFDSALHLDDELTSDLSRELENGRLVRLVTKLNF. Residues 565 to 662 are knob domain; the sequence is VNERPEYEHD…ALLKPTRRLH (98 aa).

The protein belongs to the protein kinase superfamily. PAN3 family. In terms of assembly, homodimer. Forms a heterotrimer with a catalytic subunit pan2 to form the poly(A)-nuclease (PAN) deadenylation complex. Interacts (via PAM-2 motif) with poly(A)-binding protein pab1 (via PABC domain), conferring substrate specificity of the enzyme complex.

It is found in the cytoplasm. Functionally, regulatory subunit of the poly(A)-nuclease (PAN) deadenylation complex, one of two cytoplasmic mRNA deadenylases involved in mRNA turnover. PAN specifically shortens poly(A) tails of RNA and the activity is stimulated by poly(A)-binding protein pab1. PAN deadenylation is followed by rapid degradation of the shortened mRNA tails by the CCR4-NOT complex. Deadenylated mRNAs are then degraded by two alternative mechanisms, namely exosome-mediated 3'-5' exonucleolytic degradation, or deadenylation-dependent mRNA decaping and subsequent 5'-3' exonucleolytic degradation by xrn1. May also be involved in post-transcriptional maturation of mRNA poly(A) tails. pan3 acts as a positive regulator for PAN activity, recruiting the catalytic subunit pan2 to mRNA via its interaction with RNA and with pab1. The polypeptide is PAN2-PAN3 deadenylation complex subunit PAN3 (Aspergillus oryzae (strain ATCC 42149 / RIB 40) (Yellow koji mold)).